A 311-amino-acid polypeptide reads, in one-letter code: Ribonuclease HIII (311 aa).

The RNase H type-2 domain occupies 95 to 311; sequence MSIVGSDEVG…NTEKAFRLLK (217 aa). 3 residues coordinate a divalent metal cation: Asp101, Glu102, and Asp206.

The protein belongs to the RNase HII family. RnhC subfamily. Mn(2+) is required as a cofactor. Mg(2+) serves as cofactor.

Its subcellular location is the cytoplasm. The enzyme catalyses Endonucleolytic cleavage to 5'-phosphomonoester.. Functionally, endonuclease that specifically degrades the RNA of RNA-DNA hybrids. This Bacillus anthracis (strain A0248) protein is Ribonuclease HIII.